Consider the following 891-residue polypeptide: Valine--tRNA ligase (891 aa).

Positions 43 to 53 (PFTSGTLHLGH) match the 'HIGH' region motif. Positions 536 to 540 (KMSKS) match the 'KMSKS' region motif. ATP is bound at residue Lys539.

This sequence belongs to the class-I aminoacyl-tRNA synthetase family. ValS type 2 subfamily.

The protein resides in the cytoplasm. It catalyses the reaction tRNA(Val) + L-valine + ATP = L-valyl-tRNA(Val) + AMP + diphosphate. Functionally, catalyzes the attachment of valine to tRNA(Val). As ValRS can inadvertently accommodate and process structurally similar amino acids such as threonine, to avoid such errors, it has a 'posttransfer' editing activity that hydrolyzes mischarged Thr-tRNA(Val) in a tRNA-dependent manner. This is Valine--tRNA ligase from Pyrococcus horikoshii (strain ATCC 700860 / DSM 12428 / JCM 9974 / NBRC 100139 / OT-3).